Reading from the N-terminus, the 198-residue chain is T-cell surface glycoprotein CD3 epsilon chain (198 aa).

A signal peptide spans Met1 to Gly21. The Extracellular segment spans residues Gln22–Asp117. Residues Gln37 to Ala107 form the Ig-like domain. A disulfide bridge connects residues Cys49 and Cys89. Residues Val118–Leu138 traverse the membrane as a helical segment. Topologically, residues Val139–Ile198 are cytoplasmic. Positions Pro152–Ile198 are disordered. The interval Gln166 to Arg183 is NUMB-binding region. In terms of domain architecture, ITAM spans Glu169–Arg196. The interval Arg170 to Pro177 is proline-rich sequence. Tyr179 and Tyr190 each carry phosphotyrosine. A compositionally biased stretch (polar residues) spans Asp188–Ile198.

The TCR-CD3 complex is composed of a CD3D/CD3E and a CD3G/CD3E heterodimers that preferentially associate with TCRalpha and TCRbeta, respectively, to form TCRalpha/CD3E/CD3G and TCRbeta/CD3G/CD3E trimers. In turn, the hexamer interacts with CD3Z homodimer to form the TCR-CD3 complex. Alternatively, TCRalpha and TCRbeta can be replaced by TCRgamma and TCRdelta. Interacts with CD6. Interacts (via Proline-rich sequence) with NCK1; the interaction is ligand dependent but independent of tyrosine kinase activation. In terms of processing, phosphorylated on Tyr residues after T-cell receptor triggering by LCK in association with CD4/CD8.

The protein resides in the cell membrane. In terms of biological role, part of the TCR-CD3 complex present on T-lymphocyte cell surface that plays an essential role in adaptive immune response. When antigen presenting cells (APCs) activate T-cell receptor (TCR), TCR-mediated signals are transmitted across the cell membrane by the CD3 chains CD3D, CD3E, CD3G and CD3Z. All CD3 chains contain immunoreceptor tyrosine-based activation motifs (ITAMs) in their cytoplasmic domain. Upon TCR engagement, these motifs become phosphorylated by Src family protein tyrosine kinases LCK and FYN, resulting in the activation of downstream signaling pathways. In addition of this role of signal transduction in T-cell activation, CD3E plays an essential role in correct T-cell development. Also participates in internalization and cell surface down-regulation of TCR-CD3 complexes via endocytosis sequences present in CD3E cytosolic region. In addition to its role as a TCR coreceptor, it serves as a receptor for ITPRIPL1. Ligand recognition inhibits T-cell activation by promoting interaction with NCK1, which prevents CD3E-ZAP70 interaction and blocks the ERK-NFkB signaling cascade and calcium influx. The sequence is that of T-cell surface glycoprotein CD3 epsilon chain (CD3E) from Macaca fascicularis (Crab-eating macaque).